A 130-amino-acid chain; its full sequence is Small ribosomal subunit protein uS9 (130 aa).

This sequence belongs to the universal ribosomal protein uS9 family.

The chain is Small ribosomal subunit protein uS9 from Shigella sonnei (strain Ss046).